The following is a 65-amino-acid chain: Large ribosomal subunit protein bL35 (65 aa).

It belongs to the bacterial ribosomal protein bL35 family.

The sequence is that of Large ribosomal subunit protein bL35 from Desulfitobacterium hafniense (strain DSM 10664 / DCB-2).